A 355-amino-acid polypeptide reads, in one-letter code: MKQKILFIDRDGTLIHEPSNDCQVDAINKLEFKKYIISSLCQLMNFGYKFVMVTNQDGLGSKSFPRENFNIPHFFMLNIFRSEGIIFEDVLICPHFLDDNCDCRKPQTKLLKPWLKKNKIDKQRSYVIGDRETDMELAKNINLTGIQYKEKEFNWIDITKEIIKRNRYREVIRETKETYIHIKLWLDLEHHSCIQTGINFFDHMLEQLSIHSGISMYILAKGDLQIDDHHTIEDTGIVLGEALSQALNNKNGLSRYGFVLPMDESQAKCIIDLSNRPYLSFNAHFKHKMVGDMNTDMVEHFFYSLCCSMKITLHIDVKGKNDHHCIESLFKAFGRALRKAVKIEGNTLPTSKGIL.

The histidinol-phosphatase stretch occupies residues 1–166 (MKQKILFIDR…DITKEIIKRN (166 aa)). The Nucleophile role is filled by aspartate 9. Positions 9 and 11 each coordinate Mg(2+). Aspartate 11 acts as the Proton donor in catalysis. Zn(2+)-binding residues include cysteine 93, histidine 95, cysteine 101, and cysteine 103. Aspartate 130 is a binding site for Mg(2+). The segment at 167 to 355 (RYREVIRETK…NTLPTSKGIL (189 aa)) is imidazoleglycerol-phosphate dehydratase.

In the N-terminal section; belongs to the histidinol-phosphatase family. This sequence in the C-terminal section; belongs to the imidazoleglycerol-phosphate dehydratase family. The cofactor is Mg(2+). It depends on Zn(2+) as a cofactor.

The protein localises to the cytoplasm. It carries out the reaction D-erythro-1-(imidazol-4-yl)glycerol 3-phosphate = 3-(imidazol-4-yl)-2-oxopropyl phosphate + H2O. It catalyses the reaction L-histidinol phosphate + H2O = L-histidinol + phosphate. It functions in the pathway amino-acid biosynthesis; L-histidine biosynthesis; L-histidine from 5-phospho-alpha-D-ribose 1-diphosphate: step 6/9. The protein operates within amino-acid biosynthesis; L-histidine biosynthesis; L-histidine from 5-phospho-alpha-D-ribose 1-diphosphate: step 8/9. This chain is Histidine biosynthesis bifunctional protein HisB, found in Buchnera aphidicola subsp. Schizaphis graminum (strain Sg).